The primary structure comprises 665 residues: Cysteine-rich receptor-like protein kinase 26 (665 aa).

Positions 1–22 (MLSLLLPLISLLFQIQCFTVKS) are cleaved as a signal peptide. Residues 23–283 (QPVPLNQICS…GDKNRGVPKA (261 aa)) are Extracellular-facing. Gnk2-homologous domains are found at residues 26-129 (PLNQ…NRTI) and 135-244 (ISPH…PWRF). N-linked (GlcNAc...) asparagine glycosylation is found at N33, N37, N67, N126, N146, and N266. Residues 251–275 (DDPSSVPATPSRPPKNETRSVTQGD) form a disordered region. A helical membrane pass occupies residues 284–304 (LIFASASVAIVVLFIVLLVVF). Over 305–665 (LKLRRKENIR…YNSNTELYPR (361 aa)) the chain is Cytoplasmic. One can recognise a Protein kinase domain in the interval 344 to 624 (FSLENKLGEG…VLMLDGHTIA (281 aa)). ATP-binding positions include 350-358 (LGEGGFGAV) and K372. Y417 carries the post-translational modification Phosphotyrosine. Catalysis depends on D469, which acts as the Proton acceptor. S473 carries the phosphoserine modification. Phosphothreonine is present on T510. At Y518 the chain carries Phosphotyrosine. Positions 641-665 (SDSSSSLGHNAKTSNYNSNTELYPR) are disordered. Residues 647-665 (LGHNAKTSNYNSNTELYPR) show a composition bias toward polar residues.

This sequence belongs to the protein kinase superfamily. Ser/Thr protein kinase family. CRK subfamily.

The protein resides in the membrane. It catalyses the reaction L-seryl-[protein] + ATP = O-phospho-L-seryl-[protein] + ADP + H(+). It carries out the reaction L-threonyl-[protein] + ATP = O-phospho-L-threonyl-[protein] + ADP + H(+). This is Cysteine-rich receptor-like protein kinase 26 (CRK26) from Arabidopsis thaliana (Mouse-ear cress).